The sequence spans 795 residues: Oleate activated transcription factor 3 (795 aa).

Residues 14 to 43 (CSNCKRRKSRCDRGKPACGNCIRLGNRETC) constitute a DNA-binding region (zn(2)-C6 fungal-type).

This sequence belongs to the OAF3 family.

The protein resides in the cytoplasm. It localises to the nucleus. The protein localises to the mitochondrion. In terms of biological role, transcriptional inhibitor with a significantly increased number of target genes in response to oleate. The chain is Oleate activated transcription factor 3 (OAF3) from Eremothecium gossypii (strain ATCC 10895 / CBS 109.51 / FGSC 9923 / NRRL Y-1056) (Yeast).